A 442-amino-acid chain; its full sequence is Exodeoxyribonuclease 7 large subunit (442 aa).

It belongs to the XseA family. Heterooligomer composed of large and small subunits.

Its subcellular location is the cytoplasm. It carries out the reaction Exonucleolytic cleavage in either 5'- to 3'- or 3'- to 5'-direction to yield nucleoside 5'-phosphates.. In terms of biological role, bidirectionally degrades single-stranded DNA into large acid-insoluble oligonucleotides, which are then degraded further into small acid-soluble oligonucleotides. This Rickettsia bellii (strain OSU 85-389) protein is Exodeoxyribonuclease 7 large subunit.